Here is a 447-residue protein sequence, read N- to C-terminus: Keratin, type I cytoskeletal 15 (447 aa).

The interval M1 to N93 is head. 4 positions are modified to phosphoserine: S16, S28, S33, and S47. The segment at E94 to W129 is coil 1A. One can recognise an IF rod domain in the interval E94–M406. T120 is subject to Phosphothreonine. The interval Y130–T148 is linker 1. A coil 1B region spans residues M149 to F240. Residues S241–L260 form a linker 12 region. Residues T261–Q402 form a coil 2 region. Residue K289 forms a Glycyl lysine isopeptide (Lys-Gly) (interchain with G-Cter in SUMO2) linkage. 2 positions are modified to phosphothreonine: T290 and T312. The tail stretch occupies residues D403–S447. Residue K438 forms a Glycyl lysine isopeptide (Lys-Gly) (interchain with G-Cter in SUMO1); alternate linkage. K438 is covalently cross-linked (Glycyl lysine isopeptide (Lys-Gly) (interchain with G-Cter in SUMO2); alternate).

This sequence belongs to the intermediate filament family. As to quaternary structure, heterotetramer of two type I and two type II keratins. Forms a heterodimer with KRT14. Interacts with NOD2.

The sequence is that of Keratin, type I cytoskeletal 15 from Rattus norvegicus (Rat).